The primary structure comprises 185 residues: Ribosome-recycling factor (185 aa).

Belongs to the RRF family.

Its subcellular location is the cytoplasm. Responsible for the release of ribosomes from messenger RNA at the termination of protein biosynthesis. May increase the efficiency of translation by recycling ribosomes from one round of translation to another. This is Ribosome-recycling factor from Corynebacterium glutamicum (strain R).